The following is a 106-amino-acid chain: Large ribosomal subunit protein eL36 (106 aa).

Over residues 75–93 the composition is skewed to basic and acidic residues; it reads VRQEKVGHSQESKEEERGD. Residues 75–106 form a disordered region; that stretch reads VRQEKVGHSQESKEEERGDVQCSPPDEGWWWY.

This sequence belongs to the eukaryotic ribosomal protein eL36 family.

This is Large ribosomal subunit protein eL36 (RPL36) from Daucus carota (Wild carrot).